Consider the following 284-residue polypeptide: ATP synthase subunit beta, chloroplastic (284 aa).

Belongs to the ATPase alpha/beta chains family. F-type ATPases have 2 components, CF(1) - the catalytic core - and CF(0) - the membrane proton channel. CF(1) has five subunits: alpha(3), beta(3), gamma(1), delta(1), epsilon(1). CF(0) has four main subunits: a(1), b(1), b'(1) and c(9-12).

Its subcellular location is the plastid. It localises to the chloroplast thylakoid membrane. It catalyses the reaction ATP + H2O + 4 H(+)(in) = ADP + phosphate + 5 H(+)(out). Functionally, produces ATP from ADP in the presence of a proton gradient across the membrane. The catalytic sites are hosted primarily by the beta subunits. This chain is ATP synthase subunit beta, chloroplastic (atpB), found in Asplenium nidus (Bird's nest fern).